The following is a 72-amino-acid chain: Large ribosomal subunit protein bL31 (72 aa).

Zn(2+) is bound by residues Cys16, Cys18, Cys38, and Cys41.

The protein belongs to the bacterial ribosomal protein bL31 family. Type A subfamily. As to quaternary structure, part of the 50S ribosomal subunit. The cofactor is Zn(2+).

In terms of biological role, binds the 23S rRNA. This is Large ribosomal subunit protein bL31 from Francisella tularensis subsp. holarctica (strain LVS).